Here is a 373-residue protein sequence, read N- to C-terminus: Bifunctional enzyme IspD/IspF (373 aa).

The tract at residues 1-213 is 2-C-methyl-D-erythritol 4-phosphate cytidylyltransferase; that stretch reads MSDLTLVLLG…CLQKPSATKR (213 aa). The tract at residues 213–373 is 2-C-methyl-D-erythritol 2,4-cyclodiphosphate synthase; it reads RIGNGLDVHA…TLHYFDWSEI (161 aa). A divalent metal cation is bound by residues aspartate 219 and histidine 221. Residues 219–221 and 245–246 contribute to the 4-CDP-2-C-methyl-D-erythritol 2-phosphate site; these read DVH and HS. Position 253 (histidine 253) interacts with a divalent metal cation. Residues 267 to 269, 272 to 276, 343 to 346, phenylalanine 350, and arginine 353 each bind 4-CDP-2-C-methyl-D-erythritol 2-phosphate; these read DIG, FPDSD, and TTTE.

The protein in the N-terminal section; belongs to the IspD/TarI cytidylyltransferase family. IspD subfamily. It in the C-terminal section; belongs to the IspF family. A divalent metal cation serves as cofactor.

The enzyme catalyses 2-C-methyl-D-erythritol 4-phosphate + CTP + H(+) = 4-CDP-2-C-methyl-D-erythritol + diphosphate. The catalysed reaction is 4-CDP-2-C-methyl-D-erythritol 2-phosphate = 2-C-methyl-D-erythritol 2,4-cyclic diphosphate + CMP. It participates in isoprenoid biosynthesis; isopentenyl diphosphate biosynthesis via DXP pathway; isopentenyl diphosphate from 1-deoxy-D-xylulose 5-phosphate: step 2/6. Its pathway is isoprenoid biosynthesis; isopentenyl diphosphate biosynthesis via DXP pathway; isopentenyl diphosphate from 1-deoxy-D-xylulose 5-phosphate: step 4/6. Bifunctional enzyme that catalyzes the formation of 4-diphosphocytidyl-2-C-methyl-D-erythritol from CTP and 2-C-methyl-D-erythritol 4-phosphate (MEP) (IspD), and catalyzes the conversion of 4-diphosphocytidyl-2-C-methyl-D-erythritol 2-phosphate (CDP-ME2P) to 2-C-methyl-D-erythritol 2,4-cyclodiphosphate (ME-CPP) with a corresponding release of cytidine 5-monophosphate (CMP) (IspF). This Nitratiruptor sp. (strain SB155-2) protein is Bifunctional enzyme IspD/IspF.